A 289-amino-acid chain; its full sequence is 5'-3' exonuclease (289 aa).

The region spanning 166 to 256 is the 5'-3' exonuclease domain; the sequence is VEPQKIPDYL…EEDLKIKRPD (91 aa).

Its function is as follows. 5'-3' exonuclease acting preferentially on double-stranded DNA. The protein is 5'-3' exonuclease of Aquifex aeolicus (strain VF5).